Reading from the N-terminus, the 556-residue chain is MSEETLTTEVETRTNFITHIIDEDLASGKHNNVYTRFPPEPNGYLHIGHAKSICLNFGIAQEYHGKCNLRFDDTNPVKEDIEYVASIKQDVEWLGFKWQGEPRYASDYFDQLHGYAIELIEKGLAYVDELSPEEMREYRGTLTEAGKNSPYRDRSIAENLALFEKMKNGEFKEGTACLRAKIDMASPFIVMRDPVLYRVKFAHHHQTGDKWCIYPMYDFTHCISDAIERITHSLCTLEFQDNRRLYDWVLENISIERPLPHQYEFSRLNLEGTLTSKRKLLQLVTDGIVDGWNDPRMPTISGLRRRGYTPASLREFCRRIGVTKQDNVVEYAALEACIREDLNENAPRAMAVINPVRVVIENVAEPEILKAPNHPNRPELGERDLPFTREIYIDEADFREEANKQYKRLVLGKEVRLRNAYVIKAERVEKDASGKITTIFCSYDPETLGKNPADGRKVKGVIHWVSATQNKVAEFRIYNRLFNVANPGDEEDINAVINPSSLIVKHGFVEVNLANAQKEQGYQFEREGYYCLDSKEGSADNLIFNLTVSLKEGFTA.

The 'HIGH' region signature appears at 39-49 (PEPNGYLHIGH). ATP contacts are provided by residues 40–42 (EPN) and 46–52 (HIGHAKS). Residues Asp72 and Tyr217 each contribute to the L-glutamine site. ATP contacts are provided by residues Thr236 and 267-268 (RL). The 'KMSKS' region motif lies at 274-278 (LTSKR).

It belongs to the class-I aminoacyl-tRNA synthetase family. Monomer.

It localises to the cytoplasm. The catalysed reaction is tRNA(Gln) + L-glutamine + ATP = L-glutaminyl-tRNA(Gln) + AMP + diphosphate. The sequence is that of Glutamine--tRNA ligase from Haemophilus ducreyi (strain 35000HP / ATCC 700724).